A 353-amino-acid polypeptide reads, in one-letter code: DNA integrity scanning protein DisA (353 aa).

The 139-residue stretch at 6 to 144 (DKELMNILKI…GGIKYVLRDS (139 aa)) folds into the DAC domain. ATP-binding positions include G73, L91, and 104 to 108 (TRHRT).

The protein belongs to the DisA family. As to quaternary structure, homooctamer. Requires Mg(2+) as cofactor.

It carries out the reaction 2 ATP = 3',3'-c-di-AMP + 2 diphosphate. Its function is as follows. Participates in a DNA-damage check-point that is active prior to asymmetric division when DNA is damaged. DisA forms globular foci that rapidly scan along the chromosomes during sporulation, searching for lesions. When a lesion is present, DisA pauses at the lesion site. This triggers a cellular response that culminates in a temporary block in sporulation initiation. Also has diadenylate cyclase activity, catalyzing the condensation of 2 ATP molecules into cyclic di-AMP (c-di-AMP). c-di-AMP acts as a signaling molecule that couples DNA integrity with progression of sporulation. The rise in c-di-AMP level generated by DisA while scanning the chromosome, operates as a positive signal that advances sporulation; upon encountering a lesion, the DisA focus arrests at the damaged site and halts c-di-AMP synthesis. In Clostridium botulinum (strain Kyoto / Type A2), this protein is DNA integrity scanning protein DisA.